The primary structure comprises 284 residues: Interferon antagonist OPG040 (284 aa).

ANK repeat units follow at residues 29–58 (HGHS…LKNL), 60–89 (ENEF…DDSQ), 93–122 (KGNT…RLMF), 127–157 (GWKT…TFDL), 159–188 (ILLS…STNT), and 193–222 (LFIP…NIYS).

Belongs to the orthopoxvirus OPG039 family.

It is found in the host cytoplasm. The protein localises to the host nucleus. Functionally, inhibits antiviral activity induced by type I interferons. Does not block signal transduction of IFN, but is important to counter the host antiviral state induced by a pre-treatment with IFN. Plays a role in the inhibition of host NF-kappa-B activation by preventing the acetylation of the RELA/p65 subunit of NF-kappaB. This is Interferon antagonist OPG040 (OPG039) from Bos taurus (Bovine).